Reading from the N-terminus, the 114-residue chain is Probable acid stress chaperone HdeA (114 aa).

A signal peptide spans 1 to 26; it reads MIKTLFNKNTALAAVAILALSGSAMA. Cys46 and Cys94 form a disulfide bridge.

The protein belongs to the HdeA family.

It localises to the periplasm. Required for optimal acid stress protection. Exhibits a chaperone-like activity only at low pH by suppressing non-specifically the aggregation of denaturated periplasmic proteins. This chain is Probable acid stress chaperone HdeA, found in Brucella ovis (strain ATCC 25840 / 63/290 / NCTC 10512).